Consider the following 1190-residue polypeptide: DNA-directed RNA polymerase subunit beta (1190 aa).

The interval 1155-1190 (ENFDDDDDHAPDAIMVDVKPAEREEAGEEKDAVTKE) is disordered. Over residues 1173-1190 (KPAEREEAGEEKDAVTKE) the composition is skewed to basic and acidic residues.

It belongs to the RNA polymerase beta chain family. The RNAP catalytic core consists of 2 alpha, 1 beta, 1 beta' and 1 omega subunit. When a sigma factor is associated with the core the holoenzyme is formed, which can initiate transcription.

It carries out the reaction RNA(n) + a ribonucleoside 5'-triphosphate = RNA(n+1) + diphosphate. DNA-dependent RNA polymerase catalyzes the transcription of DNA into RNA using the four ribonucleoside triphosphates as substrates. In Geobacillus kaustophilus (strain HTA426), this protein is DNA-directed RNA polymerase subunit beta.